Consider the following 391-residue polypeptide: Elongation factor Tu (391 aa).

Residues Lys10–Glu201 enclose the tr-type G domain. Residues Gly19–Thr26 are G1. Gly19–Thr26 provides a ligand contact to GTP. Thr26 lines the Mg(2+) pocket. Positions Gly55 to Ser59 are G2. A G3 region spans residues Asp76 to Gly79. GTP-binding positions include Asp76 to His80 and Asn131 to Asp134. The segment at Asn131–Asp134 is G4. The tract at residues Ser169–Leu171 is G5.

This sequence belongs to the TRAFAC class translation factor GTPase superfamily. Classic translation factor GTPase family. EF-Tu/EF-1A subfamily. In terms of assembly, monomer.

The protein localises to the cytoplasm. It catalyses the reaction GTP + H2O = GDP + phosphate + H(+). In terms of biological role, GTP hydrolase that promotes the GTP-dependent binding of aminoacyl-tRNA to the A-site of ribosomes during protein biosynthesis. The protein is Elongation factor Tu of Brucella canis (strain ATCC 23365 / NCTC 10854 / RM-666).